A 152-amino-acid polypeptide reads, in one-letter code: UPF0178 protein Bcer98_3021 (152 aa).

It belongs to the UPF0178 family.

This Bacillus cytotoxicus (strain DSM 22905 / CIP 110041 / 391-98 / NVH 391-98) protein is UPF0178 protein Bcer98_3021.